The primary structure comprises 196 residues: Cilia- and flagella-associated protein 107 (196 aa).

2 mn regions span residues 46–61 and 96–108; these read TPQTIYRKEYVPFPGH and ISTYDDHYNRHNY. The tract at residues 168-196 is disordered; that stretch reads YPRPPAGAMSRREHAIPVPPPRLQPVPHF. The segment covering 184-196 has biased composition (pro residues); that stretch reads PVPPPRLQPVPHF.

In terms of assembly, microtubule inner protein component of sperm flagellar doublet microtubules. As to expression, expressed in trachea multiciliated cells.

The protein resides in the cytoplasm. The protein localises to the cytoskeleton. It is found in the cilium axoneme. It localises to the flagellum axoneme. In terms of biological role, microtubule inner protein (MIP) part of the dynein-decorated doublet microtubules (DMTs) in cilia axoneme, which is required for motile cilia beating. The protein is Cilia- and flagella-associated protein 107 of Bos taurus (Bovine).